A 60-amino-acid chain; its full sequence is uncharacterized protein (60 aa).

Residues 14 to 34 (MLFLGTIGLAVVVGGLMAYGY) traverse the membrane as a helical segment. The tract at residues 38–60 (GKTPSSGTSFHTASPSFSSRYRY) is disordered. Polar residues predominate over residues 40 to 60 (TPSSGTSFHTASPSFSSRYRY).

It is found in the host membrane. This is an uncharacterized protein from Dryophytes versicolor (chameleon treefrog).